A 67-amino-acid polypeptide reads, in one-letter code: Large ribosomal subunit protein bL35 (67 aa).

The protein belongs to the bacterial ribosomal protein bL35 family.

This is Large ribosomal subunit protein bL35 from Leptospira borgpetersenii serovar Hardjo-bovis (strain JB197).